We begin with the raw amino-acid sequence, 329 residues long: Anthranilate phosphoribosyltransferase (329 aa).

Residues G78, G81–D82, T86, N88–T91, K106–G114, and S118 contribute to the 5-phospho-alpha-D-ribose 1-diphosphate site. Residue G78 coordinates anthranilate. S90 is a Mg(2+) binding site. Residue N109 participates in anthranilate binding. Residue R164 participates in anthranilate binding. Mg(2+)-binding residues include D221 and E222.

Belongs to the anthranilate phosphoribosyltransferase family. Homodimer. Mg(2+) serves as cofactor.

It catalyses the reaction N-(5-phospho-beta-D-ribosyl)anthranilate + diphosphate = 5-phospho-alpha-D-ribose 1-diphosphate + anthranilate. It functions in the pathway amino-acid biosynthesis; L-tryptophan biosynthesis; L-tryptophan from chorismate: step 2/5. In terms of biological role, catalyzes the transfer of the phosphoribosyl group of 5-phosphorylribose-1-pyrophosphate (PRPP) to anthranilate to yield N-(5'-phosphoribosyl)-anthranilate (PRA). The protein is Anthranilate phosphoribosyltransferase of Pyrobaculum islandicum (strain DSM 4184 / JCM 9189 / GEO3).